The following is a 525-amino-acid chain: DNA damage-binding protein cmr1 (525 aa).

Residues 34–50 are compositionally biased toward polar residues; that stretch reads TGVFTSNMPRGTSANQS. 3 disordered regions span residues 34–103, 214–240, and 282–301; these read TGVF…ERAK, DASQEKPTSAVKNEDDEDDEDDDDPDP, and TSSVEKYAPESTSDDVPISG. Residues 83-102 are compositionally biased toward basic and acidic residues; that stretch reads EIAKRKADEEYDRRQEEERA. A WD 1 repeat occupies 182–223; it reads ITPERIYSMTFHPSEAKPVIFAGDKMGHLGILDASQEKPTSA. Acidic residues predominate over residues 227–239; the sequence is EDDEDDEDDDDPD. 5 WD repeats span residues 247 to 287, 339 to 379, 384 to 425, 448 to 491, and 494 to 525; these read PHTR…SVEK, LSEK…HTDP, EHQS…SSWK, GRWV…LAQL, and DGITAVPAVAVFHRSKNWVAGGTASGKICLWM.

The protein belongs to the WD repeat DDB2/WDR76 family.

Functionally, DNA-binding protein that binds to both single- and double-stranded DNA. Binds preferentially to UV-damaged DNA. May be involved in DNA-metabolic processes. This chain is DNA damage-binding protein cmr1, found in Emericella nidulans (strain FGSC A4 / ATCC 38163 / CBS 112.46 / NRRL 194 / M139) (Aspergillus nidulans).